The chain runs to 168 residues: RNA pyrophosphohydrolase (168 aa).

In terms of domain architecture, Nudix hydrolase spans 8–160 (PYRPCVGLAI…KRQVYERVAR (153 aa)). A Nudix box motif is present at residues 47-68 (GGIDKGEEPYEAALRELYEETS).

The protein belongs to the Nudix hydrolase family. RppH subfamily. It depends on a divalent metal cation as a cofactor.

In terms of biological role, accelerates the degradation of transcripts by removing pyrophosphate from the 5'-end of triphosphorylated RNA, leading to a more labile monophosphorylated state that can stimulate subsequent ribonuclease cleavage. The protein is RNA pyrophosphohydrolase of Azorhizobium caulinodans (strain ATCC 43989 / DSM 5975 / JCM 20966 / LMG 6465 / NBRC 14845 / NCIMB 13405 / ORS 571).